Here is a 462-residue protein sequence, read N- to C-terminus: NEDD8-activating enzyme E1 catalytic subunit (462 aa).

The residue at position 2 (A2) is an N-acetylalanine. Residues 53-70 are interaction with UBE2M N-terminus; that stretch reads HPDFEPSTESLQFLLDTC. Residues 100–124 and 148–171 contribute to the ATP site; these read DMDTIDVSNLNRQFLFRPKDVGRPK and IQDFNDTFYRQFHIIVCGLDSIIA. 2 interaction with UBE2M N-terminus regions span residues 157–161 and 192–217; these read RQFHI and PSSIVPLIDGGTEGFKGNARVILPGM. An interaction with NEDD8 region spans residues 227–229; that stretch reads LYP. The active-site Glycyl thioester intermediate is C237. Interaction with NAE1 regions lie at residues 242-248 and 292-295; these read MPRLPEH and YNIR. The tract at residues 331-338 is interaction with UBE2M N-terminus; sequence IATSAYIP. The segment at 352–357 is interaction with NEDD8; that stretch reads YTYTFE. The interaction with UBE2M core domain stretch occupies residues 368–462; sequence SQLPQNIQFS…QTVLFKLHFT (95 aa).

It belongs to the ubiquitin-activating E1 family. UBA3 subfamily. Heterodimer of UBA3 and NAE1. Interacts with NEDD8, UBE2F and UBE2M. Binds ESR1 and ESR2 with bound steroid ligand. Interacts with TBATA.

The catalysed reaction is ATP + [NEDD8 protein] + [E1 NEDD8-activating enzyme]-L-cysteine = AMP + diphosphate + [E1 NEDD8-activating enzyme]-S-[NEDD8 protein]-yl-L-cysteine.. It functions in the pathway protein modification; protein neddylation. Binding of TP53BP2 to the regulatory subunit NAE1 decreases activity. Functionally, catalytic subunit of the dimeric UBA3-NAE1 E1 enzyme. E1 activates NEDD8 by first adenylating its C-terminal glycine residue with ATP, thereafter linking this residue to the side chain of the catalytic cysteine, yielding a NEDD8-UBA3 thioester and free AMP. E1 finally transfers NEDD8 to the catalytic cysteine of UBE2M. Down-regulates steroid receptor activity. Necessary for cell cycle progression. The chain is NEDD8-activating enzyme E1 catalytic subunit (Uba3) from Mus musculus (Mouse).